The sequence spans 2567 residues: Highly reducing polyketide synthase sor1 (2567 aa).

Positions 14 to 436 (SEPIAIIGMS…GANAHIILED (423 aa)) constitute a Ketosynthase family 3 (KS3) domain. Residues Cys-187, His-322, and His-359 each act as for beta-ketoacyl synthase activity in the active site. The tract at residues 550–841 (VFTGQGAQWW…VVEVGPHTAL (292 aa)) is malonyl-CoA:ACP transacylase (MAT) domain. The N-terminal hotdog fold stretch occupies residues 939-1079 (HHLLGSLVEG…GLISIEFEAS (141 aa)). The dehydratase (DH) domain stretch occupies residues 939–1249 (HHLLGSLVEG…GFSYQSLGRS (311 aa)). One can recognise a PKS/mFAS DH domain in the interval 939-1252 (HHLLGSLVEG…YQSLGRSVSL (314 aa)). His-971 acts as the Proton acceptor; for dehydratase activity in catalysis. Residues 1095 to 1252 (YKRQIPPAQL…YQSLGRSVSL (158 aa)) form a C-terminal hotdog fold region. The active-site Proton donor; for dehydratase activity is the Asp-1161. The interval 1426 to 1534 (LEIGASTGGI…RSLLKPGGTL (109 aa)) is methyltransferase (CMet) domain. The enoyl reductase (ER) domain stretch occupies residues 1852 to 2163 (FLPELLVFGD…TEEETGKRVL (312 aa)). Residues 2187-2369 (ASYLIVGGNG…AVSIDLSLVD (183 aa)) form a ketoreductase (KR) domain region. The Carrier domain occupies 2481–2558 (EAISVVGSAV…QLVANVVDRS (78 aa)). The residue at position 2518 (Ser-2518) is an O-(pantetheine 4'-phosphoryl)serine.

Its pathway is secondary metabolite biosynthesis. In terms of biological role, highly reducing polyketide synthase; part of the SOR gene cluster that mediates the biosynthesis of sorbicillinoids, a diverse group of yellow secondary metabolites that restrict growth of competing pathogenic fungi but not of bacteria. Sorbicillinoids biosynthesis requires the action of two PKSs. The SOR cluster is required for the production of trichodimerol and dihydrotrichotetronin, with sor2 being sufficient for production of trichodimerol, but not dihydrotrichotetronin in the light. Sor1 iteratively combines three acetyl units and the growing chain is modified by the ketoacyl reductase subunit, and optional by the enoyl reductase subunit in the second cycle. The polyketide is then handed over to the PKS sor2, which adds three more acetyl units, and two methyl groups. Sor2 releases an aldehyde, which undergoes spontaneous cyclization resulting in the formation of sorbicillin or 2',3'-dihydrosorbicillin. The monooxygenase sor5 oxidizes sorbicillin and 2',3'-dihydrosorbicillin to 2',3'-dihydrosorbicillinol and sorbicillinol, respectively. The oxidoreductase sor8 further converts sorbicillinol into oxosorbicillinol. Sorbicillinol is the building block for the other sorbicillinoids such as disorbicillinol, bisvertinolon, dihydrobisvertinolone, and dihydrotrichotetronine. The polypeptide is Highly reducing polyketide synthase sor1 (Hypocrea jecorina (strain QM6a) (Trichoderma reesei)).